The sequence spans 375 residues: DNA replication and repair protein RecF (375 aa).

Residue 30 to 37 (GDNAQGKT) participates in ATP binding.

This sequence belongs to the RecF family.

It localises to the cytoplasm. Its function is as follows. The RecF protein is involved in DNA metabolism; it is required for DNA replication and normal SOS inducibility. RecF binds preferentially to single-stranded, linear DNA. It also seems to bind ATP. The chain is DNA replication and repair protein RecF from Symbiobacterium thermophilum (strain DSM 24528 / JCM 14929 / IAM 14863 / T).